The primary structure comprises 384 residues: Dual-specificity RNA methyltransferase RlmN (384 aa).

The active-site Proton acceptor is the E105. In terms of domain architecture, Radical SAM core spans 111 to 350 (EDDRATLCVS…TIVRKTRGDD (240 aa)). Cysteines 118 and 355 form a disulfide. The [4Fe-4S] cluster site is built by C125, C129, and C132. S-adenosyl-L-methionine contacts are provided by residues 179–180 (GE), S211, 233–235 (SLH), and N312. C355 (S-methylcysteine intermediate) is an active-site residue.

This sequence belongs to the radical SAM superfamily. RlmN family. [4Fe-4S] cluster serves as cofactor.

The protein resides in the cytoplasm. The enzyme catalyses adenosine(2503) in 23S rRNA + 2 reduced [2Fe-2S]-[ferredoxin] + 2 S-adenosyl-L-methionine = 2-methyladenosine(2503) in 23S rRNA + 5'-deoxyadenosine + L-methionine + 2 oxidized [2Fe-2S]-[ferredoxin] + S-adenosyl-L-homocysteine. The catalysed reaction is adenosine(37) in tRNA + 2 reduced [2Fe-2S]-[ferredoxin] + 2 S-adenosyl-L-methionine = 2-methyladenosine(37) in tRNA + 5'-deoxyadenosine + L-methionine + 2 oxidized [2Fe-2S]-[ferredoxin] + S-adenosyl-L-homocysteine. Specifically methylates position 2 of adenine 2503 in 23S rRNA and position 2 of adenine 37 in tRNAs. m2A2503 modification seems to play a crucial role in the proofreading step occurring at the peptidyl transferase center and thus would serve to optimize ribosomal fidelity. In Escherichia coli O157:H7, this protein is Dual-specificity RNA methyltransferase RlmN.